Reading from the N-terminus, the 327-residue chain is tRNA dimethylallyltransferase (327 aa).

Position 14–21 (14–21 (GPTASGKT)) interacts with ATP. 16–21 (TASGKT) is a substrate binding site. Interaction with substrate tRNA stretches follow at residues 39–42 (DSAL) and 163–167 (QRIQR).

It belongs to the IPP transferase family. In terms of assembly, monomer. It depends on Mg(2+) as a cofactor.

It catalyses the reaction adenosine(37) in tRNA + dimethylallyl diphosphate = N(6)-dimethylallyladenosine(37) in tRNA + diphosphate. Its function is as follows. Catalyzes the transfer of a dimethylallyl group onto the adenine at position 37 in tRNAs that read codons beginning with uridine, leading to the formation of N6-(dimethylallyl)adenosine (i(6)A). The sequence is that of tRNA dimethylallyltransferase from Xanthomonas oryzae pv. oryzae (strain PXO99A).